A 154-amino-acid chain; its full sequence is MTIWVDADACPNVIKEILYRAAERMQMPLVLVANQSLRVPPSRFIRTLRVAAGFDVADNEIVRQCEAGDLVITADIPLAAEAIEKGAAAINPRGERYTPATIRERLTMRDFMDTLRASGIQTGGPDSLSQRDRQAFAAELEKWWLEVQRSRGQM.

Belongs to the UPF0178 family.

This is UPF0178 protein YaiI from Escherichia coli (strain ATCC 8739 / DSM 1576 / NBRC 3972 / NCIMB 8545 / WDCM 00012 / Crooks).